The following is a 195-amino-acid chain: Holliday junction branch migration complex subunit RuvA (195 aa).

Residues M1–S64 form a domain I region. Positions D65–P142 are domain II. The flexible linker stretch occupies residues G143–E151. Positions E151–A195 are domain III.

Belongs to the RuvA family. In terms of assembly, homotetramer. Forms an RuvA(8)-RuvB(12)-Holliday junction (HJ) complex. HJ DNA is sandwiched between 2 RuvA tetramers; dsDNA enters through RuvA and exits via RuvB. An RuvB hexamer assembles on each DNA strand where it exits the tetramer. Each RuvB hexamer is contacted by two RuvA subunits (via domain III) on 2 adjacent RuvB subunits; this complex drives branch migration. In the full resolvosome a probable DNA-RuvA(4)-RuvB(12)-RuvC(2) complex forms which resolves the HJ.

Its subcellular location is the cytoplasm. Its function is as follows. The RuvA-RuvB-RuvC complex processes Holliday junction (HJ) DNA during genetic recombination and DNA repair, while the RuvA-RuvB complex plays an important role in the rescue of blocked DNA replication forks via replication fork reversal (RFR). RuvA specifically binds to HJ cruciform DNA, conferring on it an open structure. The RuvB hexamer acts as an ATP-dependent pump, pulling dsDNA into and through the RuvAB complex. HJ branch migration allows RuvC to scan DNA until it finds its consensus sequence, where it cleaves and resolves the cruciform DNA. The chain is Holliday junction branch migration complex subunit RuvA from Chloroflexus aurantiacus (strain ATCC 29364 / DSM 637 / Y-400-fl).